The chain runs to 191 residues: Large ribosomal subunit protein uL5 (191 aa).

Belongs to the universal ribosomal protein uL5 family. In terms of assembly, part of the 50S ribosomal subunit; part of the 5S rRNA/L5/L18/L25 subcomplex. Contacts the 5S rRNA and the P site tRNA. Forms a bridge to the 30S subunit in the 70S ribosome.

Functionally, this is one of the proteins that bind and probably mediate the attachment of the 5S RNA into the large ribosomal subunit, where it forms part of the central protuberance. In the 70S ribosome it contacts protein S13 of the 30S subunit (bridge B1b), connecting the 2 subunits; this bridge is implicated in subunit movement. Contacts the P site tRNA; the 5S rRNA and some of its associated proteins might help stabilize positioning of ribosome-bound tRNAs. The protein is Large ribosomal subunit protein uL5 of Salinibacter ruber (strain DSM 13855 / M31).